Consider the following 547-residue polypeptide: Putative nitric oxide synthase (547 aa).

The span at 24-40 (QLAPNPSSFSPTRAAST) shows a compositional bias: low complexity. 2 disordered regions span residues 24 to 57 (QLAPNPSSFSPTRAASTAPPPPEGAGPAAPSRGD) and 72 to 91 (VLAPEDAERRRRRREKRKAL). The span at 81-91 (RRRRREKRKAL) shows a compositional bias: basic residues. The region spanning 167–343 (ADQLRDKLSY…LYDTPGVHLH (177 aa)) is the CP-type G domain.

It belongs to the TRAFAC class YlqF/YawG GTPase family. NOA1 subfamily.

The enzyme catalyses 2 L-arginine + 3 NADPH + 4 O2 + H(+) = 2 L-citrulline + 2 nitric oxide + 3 NADP(+) + 4 H2O. In terms of biological role, produces nitric oxide (NO) which is a messenger molecule involved in hormonal signaling and defense responses in plant. In Oryza sativa subsp. japonica (Rice), this protein is Putative nitric oxide synthase.